Consider the following 191-residue polypeptide: Cytochrome c oxidase assembly protein CtaG (191 aa).

Residues 1 to 9 (MALNGPQKT) are Cytoplasmic-facing. A helical; Signal-anchor for type II membrane protein transmembrane segment spans residues 10–30 (VVQLVSVVVVMGGLAWASVPF). Topologically, residues 31–191 (YDWFCRVTGF…LDAGEKTNTN (161 aa)) are periplasmic.

Belongs to the COX11/CtaG family.

Its subcellular location is the cell inner membrane. Its function is as follows. Exerts its effect at some terminal stage of cytochrome c oxidase synthesis, probably by being involved in the insertion of the copper B into subunit I. The chain is Cytochrome c oxidase assembly protein CtaG from Ruegeria pomeroyi (strain ATCC 700808 / DSM 15171 / DSS-3) (Silicibacter pomeroyi).